Reading from the N-terminus, the 435-residue chain is MSETPIVSNHDLGKYVDQKVVIQGWVHGIRGSNARQFLSLRNSGKILQVLAEKEILGEEVFQTVKHLRQETSVTVIGNLVKNEKSPIGFELVMESIQIVGESENYPITPKEHGIDFLISQRHLWLRSSKQLAILRVRDSLSFAIRKYFHERDFLLIDTPILTGSVGESAGTLFSTEYFDLGNAYLAQTGQLYLETAIFAHNKVFCYGPTFRAEKSKTRRHLTEFWMVEAEVAFATHAENLKLQEDFVKTVIKETVQNSFQDLKVLERDPAPLLAYLEKDFPVIDYTKALEILQSKGEDIVWGDDINSEREQLLTVEFGGPVFIQKYPREAKAFYMKVNPEDPRTVLNADLIAPDGVGEIIGGSEREENYENIVQRLKEEKLPVESYDWYLDLRKYGSVPHSGFGLGSERLIAWICGLAHVRECIPFPRMMERLYP.

It belongs to the class-II aminoacyl-tRNA synthetase family. In terms of assembly, homodimer.

Its subcellular location is the cytoplasm. The enzyme catalyses tRNA(Asn) + L-asparagine + ATP = L-asparaginyl-tRNA(Asn) + AMP + diphosphate + H(+). In Leptospira interrogans serogroup Icterohaemorrhagiae serovar Lai (strain 56601), this protein is Asparagine--tRNA ligase.